We begin with the raw amino-acid sequence, 552 residues long: Carboxypeptidase Y homolog A (552 aa).

The signal sequence occupies residues 1–17 (MRVLPATLLVGAATAAT). Residues 18–133 (PAQQVLGGLQ…KLEAYDLRIK (116 aa)) constitute a propeptide that is removed on maturation. 5 cysteine pairs are disulfide-bonded: cysteine 188–cysteine 428, cysteine 322–cysteine 336, cysteine 346–cysteine 369, cysteine 353–cysteine 362, and cysteine 391–cysteine 398. Asparagine 219 carries N-linked (GlcNAc...) asparagine glycosylation. The active site involves serine 275. Aspartate 467 is a catalytic residue. A glycan (N-linked (GlcNAc...) asparagine) is linked at asparagine 518. Histidine 529 is a catalytic residue.

This sequence belongs to the peptidase S10 family.

It is found in the vacuole. The enzyme catalyses Release of a C-terminal amino acid with broad specificity.. In terms of biological role, vacuolar carboxypeptidase involved in degradation of small peptides. Digests preferentially peptides containing an aliphatic or hydrophobic residue in P1' position, as well as methionine, leucine or phenylalanine in P1 position of ester substrate. The chain is Carboxypeptidase Y homolog A (cpyA) from Emericella nidulans (strain FGSC A4 / ATCC 38163 / CBS 112.46 / NRRL 194 / M139) (Aspergillus nidulans).